Consider the following 290-residue polypeptide: Inositol monophosphatase 2 (290 aa).

4 residues coordinate Mg(2+): Glu-83, Asp-103, Ile-105, and Asp-106. Glu-83 contacts substrate. Residues 105 to 108, 207 to 209, Gln-226, and Asp-233 contribute to the substrate site; these read IDGT and GSS. Asp-233 is a binding site for Mg(2+).

Belongs to the inositol monophosphatase superfamily. As to quaternary structure, homodimer. Mg(2+) serves as cofactor.

It localises to the cytoplasm. It carries out the reaction a myo-inositol phosphate + H2O = myo-inositol + phosphate. The protein operates within polyol metabolism; myo-inositol biosynthesis; myo-inositol from D-glucose 6-phosphate: step 2/2. In terms of biological role, can use myo-inositol monophosphates, scylloinositol 1,4-diphosphate, glucose-1-phosphate, beta-glycerophosphate, and 2'-AMP as substrates. Has been implicated as the pharmacological target for lithium Li(+) action in brain. The chain is Inositol monophosphatase 2 (Impa2) from Rattus norvegicus (Rat).